A 216-amino-acid chain; its full sequence is MOB kinase activator 1B (216 aa).

The residue at position 2 (serine 2) is an N-acetylserine. 2 positions are modified to phosphothreonine; by STK4/MST1: threonine 12 and threonine 35. Residues cysteine 79, cysteine 84, histidine 161, and histidine 166 each contribute to the Zn(2+) site.

Belongs to the MOB1/phocein family. Binds STK38L. Interacts with LATS1 and LATS2. In terms of processing, phosphorylated by STK3/MST2 and STK4/MST1 and this phosphorylation enhances its binding to LATS1. Adrenal gland, bone marrow, brain, lung, placenta, prostate, salivary gland, skeletal muscle, testis, thymus, thyroid gland, uterus, colon with mucosa, fetal brain and fetal liver.

The protein resides in the cytoplasm. It is found in the nucleus. Its function is as follows. Activator of LATS1/2 in the Hippo signaling pathway which plays a pivotal role in organ size control and tumor suppression by restricting proliferation and promoting apoptosis. The core of this pathway is composed of a kinase cascade wherein STK3/MST2 and STK4/MST1, in complex with its regulatory protein SAV1, phosphorylates and activates LATS1/2 in complex with its regulatory protein MOB1, which in turn phosphorylates and inactivates YAP1 oncoprotein and WWTR1/TAZ. Phosphorylation of YAP1 by LATS1/2 inhibits its translocation into the nucleus to regulate cellular genes important for cell proliferation, cell death, and cell migration. Stimulates the kinase activity of STK38L. The chain is MOB kinase activator 1B from Homo sapiens (Human).